The following is a 467-amino-acid chain: Nuclear distribution protein nudF (467 aa).

In terms of domain architecture, LisH spans 9–41 (QAEELHKSIIAYLASVNLTESSAALRAELGDSV). Residues 60–87 (TSVVRLQKKIMDLESRCAALQSELDSAT) are a coiled coil. 8 WD repeats span residues 113 to 154 (GHRN…RTVK), 156 to 196 (HTKA…KNIR), 200 to 247 (GHDH…CVKT), 250 to 289 (GHVDWVRAVAPSIDGRFLLAAGDDRIPRLWDLSSAETKST), 292 to 352 (GHEH…IKTL), 354 to 393 (GHDNWVRALAFHPGGKHLLSVADDKTIRCWDLTQECKCVR), 398 to 428 (AHGHFVTCLRWAPPLIKDGGANGEAETNGTP), and 429 to 466 (AATSTTNGVRPDPNVATKISIRCVIATGSVDQKVRIFA). A disordered region spans residues 417 to 439 (GANGEAETNGTPAATSTTNGVRP). Positions 422-436 (AETNGTPAATSTTNG) are enriched in polar residues.

Belongs to the WD repeat LIS1/nudF family. As to quaternary structure, self-associates. Interacts with nudE and dynein.

Its subcellular location is the cytoplasm. The protein resides in the cytoskeleton. It is found in the spindle pole. Positively regulates the activity of the minus-end directed microtubule motor protein dynein. May enhance dynein-mediated microtubule sliding by targeting dynein to the microtubule plus end. Required for nuclear migration during vegetative growth as well as development. Required for retrograde early endosome (EE) transport from the hyphal tip. Required for localization of dynein to the mitotic spindle poles. Recruits additional proteins to the dynein complex at SPBs. The protein is Nuclear distribution protein nudF of Aspergillus fumigatus (strain CBS 144.89 / FGSC A1163 / CEA10) (Neosartorya fumigata).